The sequence spans 150 residues: Transmembrane protein PMIS2 (150 aa).

Residues 1-12 (MALKPPSATQPA) are compositionally biased toward low complexity. Positions 1–61 (MALKPPSATQ…EPQEPTQTPE (61 aa)) are disordered. Positions 13–22 (PNAPATPDAP) are enriched in pro residues. The span at 23–61 (PTTGDPGASAAPGSPTTTGGPGAPAEVPQEPQEPTQTPE) shows a compositional bias: low complexity. 2 helical membrane-spanning segments follow: residues 71–91 (LCLTIFAILLFPPFGLAALYF) and 130–150 (GWFGAFVVMIGLGIIYGLVLY).

This sequence belongs to the CD225/Dispanin family.

The protein localises to the membrane. May play a role in spermatozoa mobility. The sequence is that of Transmembrane protein PMIS2 from Homo sapiens (Human).